A 153-amino-acid chain; its full sequence is Lectin-like protein EP153R (153 aa).

Residues 1 to 30 lie on the Cytoplasmic side of the membrane; the sequence is MYFKKKYIGLIDKNCEKKILDDSSTIKICY. Residues 31 to 51 form a helical membrane-spanning segment; the sequence is ILIGILIGTNMITLIYNFIFW. The Extracellular segment spans residues 52–153; that stretch reads DNYIKCYRNN…YTDLLFICGK (102 aa). Residues cysteine 67 and cysteine 78 are joined by a disulfide bond. N-linked (GlcNAc...) asparagine; by host glycans are attached at residues asparagine 83, asparagine 89, asparagine 101, asparagine 107, asparagine 113, asparagine 120, asparagine 127, and asparagine 143. Cysteine 97 and cysteine 151 are oxidised to a cystine.

The protein belongs to the asfivirus lectin-like protein family. Homodimer.

Its subcellular location is the host endoplasmic reticulum membrane. Functionally, down-regulates MHC-I expression by impairing the appropriate configuration or presentation into the plasma membrane of the latter. Participates in viral hemadsorption, which may help viral spread. Reduces the transactivating activity of host TP53, thus inhibiting apoptosis. Non-essential for virus growth in swine macrophage cell cultures. In African swine fever virus (strain Badajoz 1971 Vero-adapted) (Ba71V), this protein is Lectin-like protein EP153R.